Reading from the N-terminus, the 262-residue chain is uncharacterized protein (262 aa).

Positions 1 to 22 (MMNNSITLLLALLVGLVGFAFT) are cleaved as a signal peptide.

This sequence belongs to the IIV-6 117L family.

This is an uncharacterized protein from Aedes vexans (Inland floodwater mosquito).